We begin with the raw amino-acid sequence, 542 residues long: Chaperonin GroEL 4 (542 aa).

Residues 30-33, Lys51, 87-91, Gly415, and Asp496 contribute to the ATP site; these read TLGP and DGTTT.

The protein belongs to the chaperonin (HSP60) family. As to quaternary structure, forms a cylinder of 14 subunits composed of two heptameric rings stacked back-to-back. Interacts with the co-chaperonin GroES.

It localises to the cytoplasm. It carries out the reaction ATP + H2O + a folded polypeptide = ADP + phosphate + an unfolded polypeptide.. In terms of biological role, together with its co-chaperonin GroES, plays an essential role in assisting protein folding. The GroEL-GroES system forms a nano-cage that allows encapsulation of the non-native substrate proteins and provides a physical environment optimized to promote and accelerate protein folding. In Rhizobium etli (strain ATCC 51251 / DSM 11541 / JCM 21823 / NBRC 15573 / CFN 42), this protein is Chaperonin GroEL 4.